A 407-amino-acid chain; its full sequence is F-box protein SKIP23 (407 aa).

One can recognise an F-box domain in the interval 2–50 (VDWSTLPKDLLDLISKSLESSFDLIQFRSVCSSWRSAAEPKSPLPTHHL).

In terms of assembly, part of a SCF (ASK-cullin-F-box) protein ligase complex. Interacts with SKP1A/ASK1.

Its subcellular location is the nucleus. It functions in the pathway protein modification; protein ubiquitination. Its function is as follows. Component of SCF(ASK-cullin-F-box) E3 ubiquitin ligase complexes, which may mediate the ubiquitination and subsequent proteasomal degradation of target proteins. In Arabidopsis thaliana (Mouse-ear cress), this protein is F-box protein SKIP23 (SKIP23).